The sequence spans 1031 residues: Error-prone DNA polymerase (1031 aa).

This sequence belongs to the DNA polymerase type-C family. DnaE2 subfamily.

The protein localises to the cytoplasm. The enzyme catalyses DNA(n) + a 2'-deoxyribonucleoside 5'-triphosphate = DNA(n+1) + diphosphate. In terms of biological role, DNA polymerase involved in damage-induced mutagenesis and translesion synthesis (TLS). It is not the major replicative DNA polymerase. This chain is Error-prone DNA polymerase, found in Pseudomonas savastanoi pv. phaseolicola (strain 1448A / Race 6) (Pseudomonas syringae pv. phaseolicola (strain 1448A / Race 6)).